Reading from the N-terminus, the 814-residue chain is Echinoderm microtubule-associated protein-like 1 (814 aa).

Residues 31-72 (SMEVSDRIASLEQRVQMQEDDIQLLKSALADVVRRLNITEEQ) are a coiled coil. Positions 77–180 (NRKGPTKARP…ESKPKEPAFS (104 aa)) are disordered. Over residues 92 to 101 (PLRTTVNNGT) the composition is skewed to polar residues. Residues 103–115 (LPKKPSASLPAPS) are compositionally biased toward low complexity. The span at 127–137 (KSINRTSSSER) shows a compositional bias: polar residues. Positions 142–152 (GRRESSGDSKG) are enriched in basic and acidic residues. Residues 155 to 167 (NRTGSTSSSSSGK) show a composition bias toward low complexity. The tandem atypical propeller in EMLs stretch occupies residues 175–814 (KEPAFSPEEG…DTSIMQWRVI (640 aa)). WD repeat units follow at residues 260 to 309 (EQLQ…IWDS), 314 to 357 (TLHV…VWDW), 362 to 399 (RLADVKCSNEAVFAADFHPTDTNIIVTCGKSHLYFWTL), 408 to 445 (QGLFEKQEKPKFVLCVTFSENGDTITGDSSGNILVWGK), 449 to 488 (RISYAVQGAHEGGIFALCMLRDGTLVSGGGKDRRLISWNG), 492 to 529 (KLHKAEIPEQFGPIRTVAEGKGNVILIGTTRNFVLQGT), 534 to 571 (FTPITQGHTDELWGLAIHASKPQFLTCGHDKHATLWDA), 577 to 612 (VWDKIIEDPAQSSGFHPSGSVVAVGTLTGRWFVFDT), 616 to 654 (DLVTVHTDGNEQLSVMRYSPDGNFLAIGSHDNCIYIYGV), 663 to 700 (RVGKCSGHSSFITHLDWSVNSQFLVSNSGDYEILYWVP), 708 to 767 (SVET…LFSY), and 774 to 813 (APSHIYSGHSSHVTNVDFLCEDSHLISTGGKDTSIMQWRV).

This sequence belongs to the WD repeat EMAP family. As to quaternary structure, homotrimer; self-association is mediated by the N-terminal coiled coil. Does not interact with EML3. Binds unpolymerized tubulins via its WD repeat region. Binds repolymerizing microtubules. Interacts with TASOR. Detected in adult brain cortex, hippocampus and thalamus. Expressed in the stomach, lungs and in Sertoli cells of the testis.

The protein resides in the cytoplasm. Its subcellular location is the perinuclear region. It is found in the cytoskeleton. Functionally, modulates the assembly and organization of the microtubule cytoskeleton, and probably plays a role in regulating the orientation of the mitotic spindle and the orientation of the plane of cell division. Required for normal proliferation of neuronal progenitor cells in the developing brain and for normal brain development. Does not affect neuron migration per se. This is Echinoderm microtubule-associated protein-like 1 (Eml1) from Mus musculus (Mouse).